Reading from the N-terminus, the 802-residue chain is Ribosome-releasing factor 2, mitochondrial (802 aa).

Positions 13-297 constitute a tr-type G domain; the sequence is KKIRNIGIIA…AVVDFLPSPA (285 aa). Residues 22 to 29, 86 to 90, and 140 to 143 contribute to the GTP site; these read AHIDAGKT, DTPGH, and NKMD.

Belongs to the TRAFAC class translation factor GTPase superfamily. Classic translation factor GTPase family. EF-G/EF-2 subfamily.

The protein localises to the mitochondrion. In terms of biological role, mitochondrial GTPase that mediates the disassembly of ribosomes from messenger RNA at the termination of mitochondrial protein biosynthesis. Not involved in the GTP-dependent ribosomal translocation step during translation elongation. The chain is Ribosome-releasing factor 2, mitochondrial from Yarrowia lipolytica (strain CLIB 122 / E 150) (Yeast).